The primary structure comprises 530 residues: Probable phosphoacetylglucosamine mutase (530 aa).

S62 functions as the Phosphoserine intermediate in the catalytic mechanism. 4 residues coordinate Mg(2+): S62, D278, D280, and D282. Substrate contacts are provided by residues 369-371 (EPN), 481-485 (RPSGT), and R490.

Belongs to the phosphohexose mutase family. Requires Mg(2+) as cofactor.

It carries out the reaction N-acetyl-alpha-D-glucosamine 1-phosphate = N-acetyl-D-glucosamine 6-phosphate. It participates in nucleotide-sugar biosynthesis; UDP-N-acetyl-alpha-D-glucosamine biosynthesis; N-acetyl-alpha-D-glucosamine 1-phosphate from alpha-D-glucosamine 6-phosphate (route I): step 2/2. Catalyzes the conversion of GlcNAc-6-P into GlcNAc-1-P during the synthesis of uridine diphosphate/UDP-GlcNAc, which is a biosynthetic precursor of chitin and also supplies the amino sugars for N-linked oligosaccharides of glycoproteins. The sequence is that of Probable phosphoacetylglucosamine mutase from Encephalitozoon cuniculi (strain GB-M1) (Microsporidian parasite).